A 707-amino-acid polypeptide reads, in one-letter code: Signal transducer and activator of transcription A (707 aa).

Residues 70 to 89 are compositionally biased toward polar residues; sequence LNQSDQFNLGRSNNLTPRTN. Residues 70-246 are disordered; the sequence is LNQSDQFNLG…GNPNLSSPQP (177 aa). Positions 90–111 are enriched in low complexity; it reads QLQQLQQQQQQQQQPQQQQQQQ. Polar residues predominate over residues 112 to 121; sequence TYGTQSPIHM. Over residues 142 to 238 the composition is skewed to low complexity; the sequence is QQSYNNNNSN…QQQQQQQQGN (97 aa). Residues 242–356 adopt a coiled-coil conformation; the sequence is SSPQPILDTI…IQSILNPQHS (115 aa). Residues 443–487 mediate DNA binding; that stretch reads KFLAGTRKCSVNLKFGVNIRDLDNVTTTVESDASNPFVVITNECQ. One can recognise an SH2 domain in the interval 583-686; sequence WQEGIIYGYM…FLKLHKDTAL (104 aa). Y702 carries the phosphotyrosine modification.

It belongs to the transcription factor STAT family. In terms of assembly, monomer, in the absence of tyrosine phosphorylation. Homodimer, or heterodimer with another family member, when tyrosine phosphorylated. In terms of processing, tyrosine phosphorylated in response to cAMP. Not tyrosine phosphorylated in growing cells. Tyrosine phosphorylation is first detected at the tight mound stage, continues throughout the slug stage and early culmination, and starts to decrease at mid-culmination. Barely detectable in fruiting bodies.

It is found in the cytoplasm. Its subcellular location is the nucleus. Functionally, transcription factor that binds to 5'-TTGAATTGA-3' elements in the promoter region of target genes. Functions as a repressor of the ecmB gene. Regulates the differentiation of prestalk cells during development. This chain is Signal transducer and activator of transcription A (dstA), found in Dictyostelium discoideum (Social amoeba).